The chain runs to 227 residues: Esterase OVCA2 (227 aa).

The disordered stretch occupies residues 44–68 (GPHPVPDPPGPEGARSDFGSCPPEE). Catalysis depends on charge relay system residues Ser-119, Asp-179, and His-206.

The protein belongs to the LovG family. Post-translationally, proteolytically degraded in response to RA and 4HPR treatment in a time- and dose-dependent manner in the promyelocytic leukemia cell line HL-60. As to expression, ubiquitously expressed.

The enzyme catalyses a carboxylic ester + H2O = an alcohol + a carboxylate + H(+). Functionally, exhibits ester hydrolase activity with a strong preference for long-chain alkyl ester substrates and high selectivity against a variety of short, branched, and substituted esters. Is able to hydrolyze ester bonds within a wide range of p-nitrophenyl derivatives (C2-C14) in vitro, with a strong preference toward substrates of &gt;8 carbons. This Homo sapiens (Human) protein is Esterase OVCA2.